The sequence spans 331 residues: Protein C10 (331 aa).

This sequence belongs to the poxviridae C4/C10 protein family.

The protein is Protein C10 of Vaccinia virus (strain Western Reserve) (VACV).